A 372-amino-acid chain; its full sequence is Ribosomal RNA small subunit methyltransferase H (372 aa).

Residues 78 to 80, Asp-97, Tyr-124, Asp-148, and Gln-155 contribute to the S-adenosyl-L-methionine site; that span reads GGH.

It belongs to the methyltransferase superfamily. RsmH family.

It localises to the cytoplasm. The catalysed reaction is cytidine(1402) in 16S rRNA + S-adenosyl-L-methionine = N(4)-methylcytidine(1402) in 16S rRNA + S-adenosyl-L-homocysteine + H(+). Its function is as follows. Specifically methylates the N4 position of cytidine in position 1402 (C1402) of 16S rRNA. This Mycobacterium leprae (strain Br4923) protein is Ribosomal RNA small subunit methyltransferase H.